Here is a 140-residue protein sequence, read N- to C-terminus: Large ribosomal subunit protein uL16 (140 aa).

It belongs to the universal ribosomal protein uL16 family. As to quaternary structure, part of the 50S ribosomal subunit.

Functionally, binds 23S rRNA and is also seen to make contacts with the A and possibly P site tRNAs. This is Large ribosomal subunit protein uL16 from Malacoplasma penetrans (strain HF-2) (Mycoplasma penetrans).